Reading from the N-terminus, the 86-residue chain is Small ribosomal subunit protein bS18 (86 aa).

Belongs to the bacterial ribosomal protein bS18 family. In terms of assembly, part of the 30S ribosomal subunit. Forms a tight heterodimer with protein bS6.

Binds as a heterodimer with protein bS6 to the central domain of the 16S rRNA, where it helps stabilize the platform of the 30S subunit. This is Small ribosomal subunit protein bS18 from Campylobacter fetus subsp. fetus (strain 82-40).